The chain runs to 212 residues: Probable nicotinate-nucleotide adenylyltransferase (212 aa).

It belongs to the NadD family.

It catalyses the reaction nicotinate beta-D-ribonucleotide + ATP + H(+) = deamido-NAD(+) + diphosphate. It participates in cofactor biosynthesis; NAD(+) biosynthesis; deamido-NAD(+) from nicotinate D-ribonucleotide: step 1/1. Functionally, catalyzes the reversible adenylation of nicotinate mononucleotide (NaMN) to nicotinic acid adenine dinucleotide (NaAD). The sequence is that of Probable nicotinate-nucleotide adenylyltransferase from Mycobacterium avium (strain 104).